Reading from the N-terminus, the 220-residue chain is Ribose-5-phosphate isomerase A (220 aa).

Substrate is bound by residues 28 to 31 (TGST), 81 to 84 (DGAD), and 94 to 97 (KGGG). Catalysis depends on Glu-103, which acts as the Proton acceptor. Lys-121 is a substrate binding site.

It belongs to the ribose 5-phosphate isomerase family. In terms of assembly, homodimer.

It catalyses the reaction aldehydo-D-ribose 5-phosphate = D-ribulose 5-phosphate. The protein operates within carbohydrate degradation; pentose phosphate pathway; D-ribose 5-phosphate from D-ribulose 5-phosphate (non-oxidative stage): step 1/1. Functionally, catalyzes the reversible conversion of ribose-5-phosphate to ribulose 5-phosphate. The sequence is that of Ribose-5-phosphate isomerase A from Shewanella baltica (strain OS223).